Reading from the N-terminus, the 380-residue chain is 3-dehydroquinate synthase (380 aa).

Residues 100 to 104, 124 to 125, Lys-137, and Lys-146 contribute to the NAD(+) site; these read GAASD and TT. Zn(2+) contacts are provided by Glu-179, His-251, and His-267.

This sequence belongs to the sugar phosphate cyclases superfamily. Dehydroquinate synthase family. The cofactor is NAD(+). Requires Co(2+) as cofactor. Zn(2+) is required as a cofactor.

Its subcellular location is the cytoplasm. The enzyme catalyses 7-phospho-2-dehydro-3-deoxy-D-arabino-heptonate = 3-dehydroquinate + phosphate. The protein operates within metabolic intermediate biosynthesis; chorismate biosynthesis; chorismate from D-erythrose 4-phosphate and phosphoenolpyruvate: step 2/7. Catalyzes the conversion of 3-deoxy-D-arabino-heptulosonate 7-phosphate (DAHP) to dehydroquinate (DHQ). This chain is 3-dehydroquinate synthase, found in Tropheryma whipplei (strain TW08/27) (Whipple's bacillus).